A 108-amino-acid chain; its full sequence is Putative bolA-like protein K11H12.1 (108 aa).

The segment at 89-108 (SKWDGQKQEDSPTCRGGFGK) is disordered.

This sequence belongs to the BolA/IbaG family.

This is Putative bolA-like protein K11H12.1 from Caenorhabditis elegans.